The sequence spans 487 residues: N-succinylglutamate 5-semialdehyde dehydrogenase (487 aa).

221-226 provides a ligand contact to NAD(+); the sequence is GSSDTG. Catalysis depends on residues Glu-244 and Cys-278.

This sequence belongs to the aldehyde dehydrogenase family. AstD subfamily.

It catalyses the reaction N-succinyl-L-glutamate 5-semialdehyde + NAD(+) + H2O = N-succinyl-L-glutamate + NADH + 2 H(+). It functions in the pathway amino-acid degradation; L-arginine degradation via AST pathway; L-glutamate and succinate from L-arginine: step 4/5. Its function is as follows. Catalyzes the NAD-dependent reduction of succinylglutamate semialdehyde into succinylglutamate. This Paraburkholderia xenovorans (strain LB400) protein is N-succinylglutamate 5-semialdehyde dehydrogenase.